The following is a 486-amino-acid chain: Acetyl-coenzyme A carboxylase carboxyl transferase subunit beta, chloroplastic (486 aa).

The 263-residue stretch at 224–486 (LWVQCENCYG…FQFHGFFPRP (263 aa)) folds into the CoA carboxyltransferase N-terminal domain. Residues C228, C231, C247, and C250 each contribute to the Zn(2+) site. A C4-type zinc finger spans residues 228–250 (CENCYGLNYKKFFSSKMNICEQC).

It belongs to the AccD/PCCB family. In terms of assembly, acetyl-CoA carboxylase is a heterohexamer composed of biotin carboxyl carrier protein, biotin carboxylase and 2 subunits each of ACCase subunit alpha and ACCase plastid-coded subunit beta (accD). It depends on Zn(2+) as a cofactor.

Its subcellular location is the plastid. It localises to the chloroplast stroma. It carries out the reaction N(6)-carboxybiotinyl-L-lysyl-[protein] + acetyl-CoA = N(6)-biotinyl-L-lysyl-[protein] + malonyl-CoA. It participates in lipid metabolism; malonyl-CoA biosynthesis; malonyl-CoA from acetyl-CoA: step 1/1. In terms of biological role, component of the acetyl coenzyme A carboxylase (ACC) complex. Biotin carboxylase (BC) catalyzes the carboxylation of biotin on its carrier protein (BCCP) and then the CO(2) group is transferred by the transcarboxylase to acetyl-CoA to form malonyl-CoA. In Nymphaea alba (White water-lily), this protein is Acetyl-coenzyme A carboxylase carboxyl transferase subunit beta, chloroplastic.